We begin with the raw amino-acid sequence, 554 residues long: (+)-delta-cadinene synthase isozyme XC14 (554 aa).

Positions 1-16 are enriched in low complexity; sequence MASQVSQMPSSSPLSS. Residues 1-23 form a disordered region; that stretch reads MASQVSQMPSSSPLSSNKDEMRP. Mg(2+) is bound by residues D307, D311, and D451. Positions 307 to 311 match the DDXXD motif motif; that stretch reads DDTYD.

It belongs to the terpene synthase family. Mg(2+) is required as a cofactor.

The catalysed reaction is (2E,6E)-farnesyl diphosphate = (1S,8aR)-delta-cadinene + diphosphate. Its pathway is secondary metabolite biosynthesis; terpenoid biosynthesis. Responsible for the cyclization of trans,trans-farnesyl diphosphate (FPP) to (+)-delta cadinene. This Gossypium arboreum (Tree cotton) protein is (+)-delta-cadinene synthase isozyme XC14.